Consider the following 197-residue polypeptide: Nucleoside triphosphate pyrophosphatase (197 aa).

The Proton acceptor role is filled by D71.

The protein belongs to the Maf family. A divalent metal cation serves as cofactor.

The protein localises to the cytoplasm. The catalysed reaction is a ribonucleoside 5'-triphosphate + H2O = a ribonucleoside 5'-phosphate + diphosphate + H(+). It carries out the reaction a 2'-deoxyribonucleoside 5'-triphosphate + H2O = a 2'-deoxyribonucleoside 5'-phosphate + diphosphate + H(+). Functionally, nucleoside triphosphate pyrophosphatase. May have a dual role in cell division arrest and in preventing the incorporation of modified nucleotides into cellular nucleic acids. The chain is Nucleoside triphosphate pyrophosphatase from Nostoc punctiforme (strain ATCC 29133 / PCC 73102).